Consider the following 1097-residue polypeptide: Error-prone DNA polymerase (1097 aa).

The segment at 1039 to 1097 (PTGRGDEFAHGSPGGGDSRDRSPPKPRDIVVPLCRARHKGIDPEPETMPSAFPKPRDFR) is disordered. Basic and acidic residues predominate over residues 1055-1066 (DSRDRSPPKPRD).

It belongs to the DNA polymerase type-C family. DnaE2 subfamily.

The protein localises to the cytoplasm. It carries out the reaction DNA(n) + a 2'-deoxyribonucleoside 5'-triphosphate = DNA(n+1) + diphosphate. DNA polymerase involved in damage-induced mutagenesis and translesion synthesis (TLS). It is not the major replicative DNA polymerase. This chain is Error-prone DNA polymerase, found in Allorhizobium ampelinum (strain ATCC BAA-846 / DSM 112012 / S4) (Agrobacterium vitis (strain S4)).